A 123-amino-acid polypeptide reads, in one-letter code: UPF0738 protein BCE33L1094 (123 aa).

It belongs to the UPF0738 family.

The sequence is that of UPF0738 protein BCE33L1094 from Bacillus cereus (strain ZK / E33L).